The following is a 514-amino-acid chain: Mitochondrial-processing peptidase subunit alpha (514 aa).

The transit peptide at 1-55 (MLLRKSIPYIKICRDISASVRNNKEIAQKLPLSVPLPMENNSKSIEKGCPPMGRN) directs the protein to the mitochondrion.

Belongs to the peptidase M16 family. In terms of assembly, heterodimer of mppa-1 (alpha) and mppb-1 (beta) subunits, forming the mitochondrial processing protease (MPP) in which mppa-1 is involved in substrate recognition and binding and mppb-1 is the catalytic subunit.

The protein localises to the mitochondrion matrix. Substrate recognition and binding subunit of the essential mitochondrial processing protease (MPP), which cleaves the mitochondrial sequence off newly imported precursors proteins. The polypeptide is Mitochondrial-processing peptidase subunit alpha (Caenorhabditis elegans).